We begin with the raw amino-acid sequence, 155 residues long: Putative pre-16S rRNA nuclease (155 aa).

This sequence belongs to the YqgF nuclease family.

The protein localises to the cytoplasm. Functionally, could be a nuclease involved in processing of the 5'-end of pre-16S rRNA. The chain is Putative pre-16S rRNA nuclease from Xylella fastidiosa (strain M23).